The primary structure comprises 1167 residues: MAVSPANQATAATTSAESRSEATGIPGAPKRVSFAKIREPLNTPNLLDVQIQSFQWFTGDEAWFQRRVEEGEENPVGGLEEVLNEISPIEDFSGSMSLSFSAPRFDEVKASIEECKDKDMTYAAPLFVTAEFVNNNTGEIKSQTVFLGDFPVMTDKGTFVINGTERVVVSQLVRSPGVYYSKDIDKTSDKDVFSVRVIPSRGAWLEFDVDKRDTVGVRIDRKRRQPVTVLLKALGWTTEAIRERFSFSETLLATLEKDHTAGTDEALLDIYRKLRPGEPPTKESAQTLLENLFFKAKRYDLAKVGRYKVNKKLGLSTPIENGTLTEEDIVTIIEYLVRLHAGEDKMTAANNTEIPVETDDIDHFGNRRIRTVGELIQNQIRVGLSRTERVVRERMTTQDVEAITPQTLINIRPIGAAIKEFFGTSQLSQFMQQTNPIDGLTHKRRLNALGPGGLSRERAGMEVRDVHPSHYGRMCPIETPEGPNIGLIGSLCSYARVNPFGFIETPYRKVVEGRVTDQIDYLTADEEDRFVKAQANAPISDDGTFIEDRVMARRKGGEVELIDPLDIDYMDVSPRQMVSIATAMIPFLEHDDANRALMGANMQRQAVPLLRSQAPYVGTGVELRAAIDSGDMLVAEQSGVVEELSADLITVMHDDGTRKSYSLYKFRRSNHGTCFNHRPIVNEGDRIEAGQVIADGPSTENGEVALGKNLLVAVMPWEGHNYEDAIILSERLVQDDVLTSIHIEEHEIDARDTKLGAEEITRDIPNVSEEVLADLDERGIIRIGAEVRDGDILVGKVTPKGETELTPEERLLRAIFGEKAREVRDTSLKVPHGETGKVIGIRVFSREDDDELPPGVNELVRVYVAQKRKIQPGDKLAGRHGNKGVIGKILPVEDMPFMEDGTPVDIILNTHGVPRRMNIGQILELHLGWLASQGWTIEGDPDWAKNLSAELRDVAPGTNTATPVFDGAKEEELTGLLSATKPNRDGERMVKENGKANLFDGRSGEPYPYPVAVGYMYILKLHHLVDDKIHARSTGPYSMITQQPLGGKAQFGGQRFGEMECWAMQAYGAAYTLQELLTIKSDDVVGRVKVYEAIVKGENIPEPGIPESFKVLLKELQSLCLNVEVLSSDGSSIEMRDSDDEDLERAAANLGINLSRNESPSVDDVVH.

A disordered region spans residues 1–27 (MAVSPANQATAATTSAESRSEATGIPG). The span at 9–23 (ATAATTSAESRSEAT) shows a compositional bias: low complexity.

It belongs to the RNA polymerase beta chain family. In terms of assembly, the RNAP catalytic core consists of 2 alpha, 1 beta, 1 beta' and 1 omega subunit. When a sigma factor is associated with the core the holoenzyme is formed, which can initiate transcription.

It catalyses the reaction RNA(n) + a ribonucleoside 5'-triphosphate = RNA(n+1) + diphosphate. DNA-dependent RNA polymerase catalyzes the transcription of DNA into RNA using the four ribonucleoside triphosphates as substrates. This is DNA-directed RNA polymerase subunit beta from Amycolatopsis mediterranei (strain S699) (Nocardia mediterranei).